The primary structure comprises 508 residues: Pentatricopeptide repeat-containing protein At3g04130, mitochondrial (508 aa).

The transit peptide at 1–74 (MSWLIQNRIG…DSEDDVFKRL (74 aa)) directs the protein to the mitochondrion. PPR repeat units lie at residues 120–150 (SSDAYDMAVDILGKAKKWDRMKEFVERMRGD), 154–188 (TLNTVAKIMRRFAGAGEWEEAVGIFDRLGEFGLEK), 189–219 (NTESMNLLLDTLCKEKRVEQARVVLLQLKSH), 223–257 (NAHTFNIFIHGWCKANRVEEALWTIQEMKGHGFRP), 258–292 (CVISYTTIIRCYCQQFEFIKVYEMLSEMEANGSPP), 293–327 (NSITYTTIMSSLNAQKEFEEALRVATRMKRSGCKP), 328–363 (DSLFYNCLIHTLARAGRLEEAERVFRVEMPELGVSI), 364–398 (NTSTYNSMIAMYCHHDEEDKAIELLKEMESSNLCN), 400–434 (DVHTYQPLLRSCFKRGDVVEVGKLLKEMVTKHHLS), and 436–470 (DESTYTFLIQRLCRANMCEWAYCLFEEMISQDITP).

This sequence belongs to the PPR family. P subfamily.

It is found in the mitochondrion. The sequence is that of Pentatricopeptide repeat-containing protein At3g04130, mitochondrial from Arabidopsis thaliana (Mouse-ear cress).